The chain runs to 265 residues: uncharacterized protein (265 aa).

Positions 1-22 are cleaved as a signal peptide; the sequence is MGYFKRVLLYIIVMVLSVFIIG. Cys23 carries the N-palmitoyl cysteine lipid modification. Cys23 carries the S-diacylglycerol cysteine lipid modification.

It belongs to the staphylococcal tandem lipoprotein family.

It localises to the cell membrane. This is an uncharacterized protein from Staphylococcus aureus (strain MSSA476).